We begin with the raw amino-acid sequence, 415 residues long: UDP-N-acetylglucosamine 1-carboxyvinyltransferase 1 (415 aa).

23-24 (KN) is a binding site for phosphoenolpyruvate. Position 92 (Arg92) interacts with UDP-N-acetyl-alpha-D-glucosamine. The Proton donor role is filled by Cys116. Residue Cys116 is modified to 2-(S-cysteinyl)pyruvic acid O-phosphothioketal. Residues 121-125 (RPIDL), Asp304, and Val326 each bind UDP-N-acetyl-alpha-D-glucosamine.

Belongs to the EPSP synthase family. MurA subfamily.

The protein resides in the cytoplasm. It carries out the reaction phosphoenolpyruvate + UDP-N-acetyl-alpha-D-glucosamine = UDP-N-acetyl-3-O-(1-carboxyvinyl)-alpha-D-glucosamine + phosphate. The protein operates within cell wall biogenesis; peptidoglycan biosynthesis. Cell wall formation. Adds enolpyruvyl to UDP-N-acetylglucosamine. This Caldanaerobacter subterraneus subsp. tengcongensis (strain DSM 15242 / JCM 11007 / NBRC 100824 / MB4) (Thermoanaerobacter tengcongensis) protein is UDP-N-acetylglucosamine 1-carboxyvinyltransferase 1.